The following is a 119-amino-acid chain: uncharacterized protein (119 aa).

The chain crosses the membrane as a helical span at residues 30–50; the sequence is LMTLPCVLFLSSFGQAVIVVL.

The protein localises to the membrane. This is an uncharacterized protein from Saccharomyces cerevisiae (strain ATCC 204508 / S288c) (Baker's yeast).